Consider the following 329-residue polypeptide: DNA-directed RNA polymerase subunit alpha (329 aa).

The tract at residues 1-235 (MQGSVTEFLK…EQLEAFVDLR (235 aa)) is alpha N-terminal domain (alpha-NTD). Residues 249 to 329 (FDPILLRPVD…NWPPASIADE (81 aa)) are alpha C-terminal domain (alpha-CTD).

This sequence belongs to the RNA polymerase alpha chain family. Homodimer. The RNAP catalytic core consists of 2 alpha, 1 beta, 1 beta' and 1 omega subunit. When a sigma factor is associated with the core the holoenzyme is formed, which can initiate transcription.

It catalyses the reaction RNA(n) + a ribonucleoside 5'-triphosphate = RNA(n+1) + diphosphate. In terms of biological role, DNA-dependent RNA polymerase catalyzes the transcription of DNA into RNA using the four ribonucleoside triphosphates as substrates. The protein is DNA-directed RNA polymerase subunit alpha of Shigella flexneri serotype 5b (strain 8401).